The chain runs to 158 residues: Ribonuclease H (158 aa).

Positions 1–142 (MRKQVEIFTD…CDELARAAAM (142 aa)) constitute an RNase H type-1 domain. Residues aspartate 10, glutamate 48, aspartate 70, and aspartate 134 each contribute to the Mg(2+) site.

It belongs to the RNase H family. Monomer. Mg(2+) serves as cofactor.

The protein localises to the cytoplasm. The catalysed reaction is Endonucleolytic cleavage to 5'-phosphomonoester.. Endonuclease that specifically degrades the RNA of RNA-DNA hybrids. This is Ribonuclease H from Cronobacter sakazakii (strain ATCC BAA-894) (Enterobacter sakazakii).